The chain runs to 420 residues: Serine hydroxymethyltransferase (420 aa).

(6S)-5,6,7,8-tetrahydrofolate-binding positions include Leu123 and 127 to 129; that span reads GHL. The residue at position 232 (Lys232) is an N6-(pyridoxal phosphate)lysine. Residue 357–359 participates in (6S)-5,6,7,8-tetrahydrofolate binding; it reads SPF.

Belongs to the SHMT family. In terms of assembly, homodimer. Requires pyridoxal 5'-phosphate as cofactor.

It is found in the cytoplasm. The catalysed reaction is (6R)-5,10-methylene-5,6,7,8-tetrahydrofolate + glycine + H2O = (6S)-5,6,7,8-tetrahydrofolate + L-serine. It functions in the pathway one-carbon metabolism; tetrahydrofolate interconversion. Its pathway is amino-acid biosynthesis; glycine biosynthesis; glycine from L-serine: step 1/1. Functionally, catalyzes the reversible interconversion of serine and glycine with tetrahydrofolate (THF) serving as the one-carbon carrier. This reaction serves as the major source of one-carbon groups required for the biosynthesis of purines, thymidylate, methionine, and other important biomolecules. Also exhibits THF-independent aldolase activity toward beta-hydroxyamino acids, producing glycine and aldehydes, via a retro-aldol mechanism. This Streptococcus pyogenes serotype M4 (strain MGAS10750) protein is Serine hydroxymethyltransferase.